We begin with the raw amino-acid sequence, 1400 residues long: Alpha-(1-&gt;3)-arabinofuranosyltransferase (1400 aa).

Positions 1–30 (MAPLSRKWLPVVGAVALALTFAQSPGQVSP) are cleaved as a signal peptide. Transmembrane regions (helical) follow at residues 67–87 (YLFP…PGWV), 91–111 (LWWA…AEAL), 139–159 (ISSE…TILA), 179–199 (VALM…PAVI), 215–235 (AWWL…LTQL), 282–302 (LVTG…GLAG), 314–334 (LVTM…GGLA), and 401–421 (VAVA…AWTG). The 184-residue stretch at 700–883 (AEPVVGGWTG…WDLGSELLGR (184 aa)) folds into the F5/8 type C domain. 4 helical membrane-spanning segments follow: residues 1256-1276 (LYRA…LLAF), 1297-1317 (WAAA…GVMV), 1338-1358 (VTVG…SRHP), and 1369-1389 (WASV…SVVA).

It is found in the membrane. It catalyses the reaction Adds an alpha-D-arabinofuranosyl group from trans,octacis-decaprenylphospho-beta-D-arabinofuranose at the 3-O-position of an alpha-(1-&gt;5)-arabinofuranan chain attached to a beta-(1-&gt;5)-galactofuranan chain.. It participates in cell wall biogenesis; cell wall polysaccharide biosynthesis. In terms of biological role, involved in the biosynthesis of the arabinogalactan (AG) region of the mycolylarabinogalactan-peptidoglycan (mAGP) complex, an essential component of the mycobacterial cell wall. Catalyzes the addition of an arabinofuranosyl (Araf) residue from the sugar donor decaprenyl-phospho-arabinose (DPA) on the C-3 of an alpha-(1-&gt;5)-linked Araf from the arabinan backbone of AG. This is Alpha-(1-&gt;3)-arabinofuranosyltransferase (aftD) from Mycobacterium tuberculosis (strain ATCC 25618 / H37Rv).